Here is a 619-residue protein sequence, read N- to C-terminus: Kininogen-2 (619 aa).

A signal peptide spans 1–18; sequence MKLITILFLCSRLLPSLT. The residue at position 19 (Gln19) is a Pyrrolidone carboxylic acid. In terms of domain architecture, Cystatin kininogen-type 1 spans 27-131; sequence CNDQDVFKAV…IQTCLITPAE (105 aa). 9 cysteine pairs are disulfide-bonded: Cys27–Cys589, Cys82–Cys93, Cys106–Cys125, Cys141–Cys144, Cys205–Cys217, Cys228–Cys247, Cys261–Cys264, Cys325–Cys337, and Cys348–Cys367. Residue Asn87 is glycosylated (N-linked (GlcNAc...) asparagine). Thr136 is a glycosylation site (O-linked (GalNAc...) threonine; partial). The Cystatin kininogen-type 2 domain maps to 150–253; that stretch reads TKSPDLEPVL…SQKCDLYPGE (104 aa). N-linked (GlcNAc...) asparagine glycosylation is found at Asn168 and Asn169. Asn197 carries an N-linked (GlcNAc...) asparagine; partial glycan. N-linked (GlcNAc...) asparagine glycosylation is present at Asn204. In terms of domain architecture, Cystatin kininogen-type 3 spans 270–373; the sequence is VDSPDLEEAL…TVNCQPLGQT (104 aa). Asn280 is a glycosylation site (N-linked (GlcNAc...) asparagine). Residue Pro380 is modified to 4-hydroxyproline. The interval 394 to 495 is disordered; sequence EGSTTVSLPH…GKNNGKHYDW (102 aa). Residue Ser396 is glycosylated (O-linked (GalNAc...) serine). 2 O-linked (GalNAc...) threonine glycosylation sites follow: Thr397 and Thr398. 2 O-linked (GalNAc...) serine glycosylation sites follow: Ser400 and Ser404. Residues 442–490 are compositionally biased toward basic residues; it reads GHKHKHDQGHGHHRSHGLGHGHQKQHGLGHGHKHGHGHGKHKNKGKNNG. Residue Ser510 is glycosylated (O-linked (GalNAc...) serine). O-linked (GalNAc...) threonine glycans are attached at residues Thr518, Thr522, Thr534, Thr546, Thr551, and Thr568.

In terms of processing, bradykinin is released from kininogen by plasma kallikrein. As to expression, plasma.

The protein localises to the secreted. It localises to the extracellular space. In terms of biological role, (1) Kininogens are inhibitors of thiol proteases; (2) HMW-kininogen plays an important role in blood coagulation by helping to position optimally prekallikrein and factor XI next to factor XII; (3) HMW-kininogen inhibits the thrombin- and plasmin-induced aggregation of thrombocytes; (4) the active peptide bradykinin that is released from HMW-kininogen shows a variety of physiological effects: (4A) influence in smooth muscle contraction, (4B) induction of hypotension, (4C) natriuresis and diuresis, (4D) decrease in blood glucose level, (4E) it is a mediator of inflammation and causes (4E1) increase in vascular permeability, (4E2) stimulation of nociceptors (4E3) release of other mediators of inflammation (e.g. prostaglandins), (4F) it has a cardioprotective effect (directly via bradykinin action, indirectly via endothelium-derived relaxing factor action); (5) LMW-kininogen inhibits the aggregation of thrombocytes; (6) LMW-kininogen is in contrast to HMW-kininogen not involved in blood clotting. This Bos taurus (Bovine) protein is Kininogen-2 (KNG2).